Here is a 115-residue protein sequence, read N- to C-terminus: Probable 4-amino-4-deoxy-L-arabinose-phosphoundecaprenol flippase subunit ArnE (115 aa).

The next 3 helical transmembrane spans lie at 42-62, 65-85, and 93-112; these read PWPWLALLALGLGLLCWLLLL, VEVGSAYPMLALNFVLVTLAA, and VDRRHLAGLLLIVAGVVLLG. Residues 46–113 enclose the EamA domain; it reads LALLALGLGL…IVAGVVLLGR (68 aa).

It belongs to the ArnE family. As to quaternary structure, heterodimer of ArnE and ArnF.

The protein resides in the cell inner membrane. Its pathway is bacterial outer membrane biogenesis; lipopolysaccharide biosynthesis. Its function is as follows. Translocates 4-amino-4-deoxy-L-arabinose-phosphoundecaprenol (alpha-L-Ara4N-phosphoundecaprenol) from the cytoplasmic to the periplasmic side of the inner membrane. In Pseudomonas aeruginosa (strain UCBPP-PA14), this protein is Probable 4-amino-4-deoxy-L-arabinose-phosphoundecaprenol flippase subunit ArnE.